A 118-amino-acid polypeptide reads, in one-letter code: Succinate dehydrogenase assembly factor 1, mitochondrial (118 aa).

The LYR motif 1; required for interaction with HSC20 motif lies at 14–16; it reads LYR. An LYR motif 2; not required for interaction with HSC20 motif is present at residues 53–55; it reads LYR. Residues 53–65 are interaction with SDHB; the sequence is LYRRGRRQLQMLR. Residues 72–118 form a disordered region; it reads MGAFVRTRGPTEESNGAGAPGTLSGEGDDPRKPLDSMRTPKTPLDGR.

It belongs to the complex I LYR family. SDHAF1 subfamily. In terms of assembly, interacts with SDHB within an SDHA-SDHB subcomplex. Also interacts with the iron-sulfur transfer complex formed by HSC20, HSPA9 and ISCU through direct binding to HSC20. Binding of SDHAF1 to SDHB precedes and is necessary for recruitment of the iron-sulfur transfer complex by SDHAF1.

The protein localises to the mitochondrion matrix. Functionally, plays an essential role in the assembly of succinate dehydrogenase (SDH), an enzyme complex (also referred to as respiratory complex II) that is a component of both the tricarboxylic acid (TCA) cycle and the mitochondrial electron transport chain, and which couples the oxidation of succinate to fumarate with the reduction of ubiquinone (coenzyme Q) to ubiquinol. Promotes maturation of the iron-sulfur protein subunit SDHB of the SDH catalytic dimer, protecting it from the deleterious effects of oxidants. May act together with SDHAF3. Contributes to iron-sulfur cluster incorporation into SDHB by binding to SDHB and recruiting the iron-sulfur transfer complex formed by HSC20, HSPA9 and ISCU through direct binding to HSC20. The polypeptide is Succinate dehydrogenase assembly factor 1, mitochondrial (Bos taurus (Bovine)).